The primary structure comprises 155 residues: Mediator of RNA polymerase II transcription subunit 21 (155 aa).

The disordered stretch occupies residues 29–73 (QAPPSVPPGQHRVDTMPEIKGKAASENPQSNPPQPAEPPVPEKIS). Residues 39–51 (HRVDTMPEIKGKA) are compositionally biased toward basic and acidic residues. Pro residues predominate over residues 58–69 (SNPPQPAEPPVP). Residues 75 to 147 (EQFNQDLKEF…EVLLKKVEDK (73 aa)) adopt a coiled-coil conformation.

It belongs to the Mediator complex subunit 21 family. As to quaternary structure, component of the Mediator complex.

It localises to the nucleus. In terms of biological role, component of the Mediator complex, a coactivator involved in the regulated transcription of nearly all RNA polymerase II-dependent genes. Mediator functions as a bridge to convey information from gene-specific regulatory proteins to the basal RNA polymerase II transcription machinery. Mediator is recruited to promoters by direct interactions with regulatory proteins and serves as a scaffold for the assembly of a functional preinitiation complex with RNA polymerase II and the general transcription factors. In Phaeosphaeria nodorum (strain SN15 / ATCC MYA-4574 / FGSC 10173) (Glume blotch fungus), this protein is Mediator of RNA polymerase II transcription subunit 21 (SRB7).